A 215-amino-acid chain; its full sequence is Pyridoxine/pyridoxamine 5'-phosphate oxidase (215 aa).

Substrate-binding positions include 9–12 (RRDY) and Lys69. FMN-binding positions include 64-69 (RVLLLK), 79-80 (FT), Lys86, and Gln108. 3 residues coordinate substrate: Tyr126, Arg130, and Ser134. FMN-binding positions include 143–144 (QS) and Trp188. Residue 194-196 (RLH) coordinates substrate. Residue Arg198 coordinates FMN.

This sequence belongs to the pyridoxamine 5'-phosphate oxidase family. In terms of assembly, homodimer. Requires FMN as cofactor.

The enzyme catalyses pyridoxamine 5'-phosphate + O2 + H2O = pyridoxal 5'-phosphate + H2O2 + NH4(+). The catalysed reaction is pyridoxine 5'-phosphate + O2 = pyridoxal 5'-phosphate + H2O2. It functions in the pathway cofactor metabolism; pyridoxal 5'-phosphate salvage; pyridoxal 5'-phosphate from pyridoxamine 5'-phosphate: step 1/1. The protein operates within cofactor metabolism; pyridoxal 5'-phosphate salvage; pyridoxal 5'-phosphate from pyridoxine 5'-phosphate: step 1/1. Functionally, catalyzes the oxidation of either pyridoxine 5'-phosphate (PNP) or pyridoxamine 5'-phosphate (PMP) into pyridoxal 5'-phosphate (PLP). This Pseudomonas putida (strain W619) protein is Pyridoxine/pyridoxamine 5'-phosphate oxidase.